We begin with the raw amino-acid sequence, 118 residues long: Large ribosomal subunit protein bL19 (118 aa).

Belongs to the bacterial ribosomal protein bL19 family.

In terms of biological role, this protein is located at the 30S-50S ribosomal subunit interface and may play a role in the structure and function of the aminoacyl-tRNA binding site. This chain is Large ribosomal subunit protein bL19, found in Campylobacter curvus (strain 525.92).